Reading from the N-terminus, the 414-residue chain is Mu-like prophage FluMu F protein (414 aa).

To phage Mu protein F.

Involved in virion morphogenesis. The chain is Mu-like prophage FluMu F protein from Haemophilus influenzae (strain ATCC 51907 / DSM 11121 / KW20 / Rd).